The chain runs to 124 residues: MIQTILAVSIAGIAGTLLRFAAGTWVSANWPRYFYAATLAVNIVGCLIIGVLYGLFLSRPEVPVEIRAGLIVGFVGGLTTFSSFSLDTLRLLESGQVPLALGYAGISVFGGLLATWAGLSLTRL.

Helical transmembrane passes span 5-25 (ILAVSIAGIAGTLLRFAAGTW), 37-57 (ATLAVNIVGCLIIGVLYGLFL), 69-89 (GLIVGFVGGLTTFSSFSLDTL), and 99-119 (LALGYAGISVFGGLLATWAGL). The Na(+) site is built by Gly76 and Thr79.

Belongs to the fluoride channel Fluc/FEX (TC 1.A.43) family.

It is found in the cell inner membrane. The catalysed reaction is fluoride(in) = fluoride(out). With respect to regulation, na(+) is not transported, but it plays an essential structural role and its presence is essential for fluoride channel function. In terms of biological role, fluoride-specific ion channel. Important for reducing fluoride concentration in the cell, thus reducing its toxicity. The polypeptide is Fluoride-specific ion channel FluC (Pseudomonas syringae pv. tomato (strain ATCC BAA-871 / DC3000)).